A 352-amino-acid chain; its full sequence is Photosystem II D2 protein (352 aa).

Residues 40-60 (TAYLALGGWLTGTTFVTSWYT) form a helical membrane-spanning segment. A chlorophyll a-binding site is contributed by histidine 117. The helical transmembrane segment at 124-140 (GFMLRQFEIARLVGIRP) threads the bilayer. Glutamine 129 and asparagine 142 together coordinate pheophytin a. Residues 152-165 (VFVSVFLIYPLGQS) form a helical membrane-spanning segment. Histidine 197 contributes to the chlorophyll a binding site. Residues 207–227 (GALLCAIHGATVENTLFEDGE) form a helical membrane-spanning segment. The a plastoquinone site is built by histidine 214 and phenylalanine 261. Residue histidine 214 participates in Fe cation binding. Residue histidine 268 participates in Fe cation binding. A helical transmembrane segment spans residues 278–294 (GLWTSSIGIIGLALNLR).

This sequence belongs to the reaction center PufL/M/PsbA/D family. In terms of assembly, PSII is composed of 1 copy each of membrane proteins PsbA, PsbB, PsbC, PsbD, PsbE, PsbF, PsbH, PsbI, PsbJ, PsbK, PsbL, PsbM, PsbT, PsbX, PsbY, PsbZ, Psb30/Ycf12, at least 3 peripheral proteins of the oxygen-evolving complex and a large number of cofactors. It forms dimeric complexes. The cofactor is The D1/D2 heterodimer binds P680, chlorophylls that are the primary electron donor of PSII, and subsequent electron acceptors. It shares a non-heme iron and each subunit binds pheophytin, quinone, additional chlorophylls, carotenoids and lipids. There is also a Cl(-1) ion associated with D1 and D2, which is required for oxygen evolution. The PSII complex binds additional chlorophylls, carotenoids and specific lipids..

It is found in the plastid. Its subcellular location is the organellar chromatophore thylakoid membrane. It carries out the reaction 2 a plastoquinone + 4 hnu + 2 H2O = 2 a plastoquinol + O2. Photosystem II (PSII) is a light-driven water:plastoquinone oxidoreductase that uses light energy to abstract electrons from H(2)O, generating O(2) and a proton gradient subsequently used for ATP formation. It consists of a core antenna complex that captures photons, and an electron transfer chain that converts photonic excitation into a charge separation. The D1/D2 (PsbA/PsbD) reaction center heterodimer binds P680, the primary electron donor of PSII as well as several subsequent electron acceptors. D2 is needed for assembly of a stable PSII complex. This chain is Photosystem II D2 protein, found in Paulinella chromatophora.